We begin with the raw amino-acid sequence, 102 residues long: CRISPR-associated endoribonuclease Cas2 1 (102 aa).

Residue D17 coordinates Mg(2+).

This sequence belongs to the CRISPR-associated endoribonuclease Cas2 protein family. Homodimer, forms a heterotetramer with a Cas1 homodimer. Mg(2+) is required as a cofactor.

Its function is as follows. CRISPR (clustered regularly interspaced short palindromic repeat), is an adaptive immune system that provides protection against mobile genetic elements (viruses, transposable elements and conjugative plasmids). CRISPR clusters contain sequences complementary to antecedent mobile elements and target invading nucleic acids. CRISPR clusters are transcribed and processed into CRISPR RNA (crRNA). Functions as a ssRNA-specific endoribonuclease. Involved in the integration of spacer DNA into the CRISPR cassette. This Rhodospirillum rubrum (strain ATCC 11170 / ATH 1.1.1 / DSM 467 / LMG 4362 / NCIMB 8255 / S1) protein is CRISPR-associated endoribonuclease Cas2 1.